The sequence spans 302 residues: 4-hydroxy-tetrahydrodipicolinate synthase (302 aa).

A pyruvate-binding site is contributed by threonine 44. The Proton donor/acceptor role is filled by tyrosine 132. The active-site Schiff-base intermediate with substrate is the lysine 160. Pyruvate is bound at residue valine 202.

It belongs to the DapA family. Homotetramer; dimer of dimers.

The protein localises to the cytoplasm. The catalysed reaction is L-aspartate 4-semialdehyde + pyruvate = (2S,4S)-4-hydroxy-2,3,4,5-tetrahydrodipicolinate + H2O + H(+). The protein operates within amino-acid biosynthesis; L-lysine biosynthesis via DAP pathway; (S)-tetrahydrodipicolinate from L-aspartate: step 3/4. Its function is as follows. Catalyzes the condensation of (S)-aspartate-beta-semialdehyde [(S)-ASA] and pyruvate to 4-hydroxy-tetrahydrodipicolinate (HTPA). The sequence is that of 4-hydroxy-tetrahydrodipicolinate synthase from Thermomicrobium roseum (strain ATCC 27502 / DSM 5159 / P-2).